Reading from the N-terminus, the 1039-residue chain is Multidrug resistance protein MdtB (1039 aa).

Transmembrane regions (helical) follow at residues 16–36 (FILRPVATTLLMVAILLAGII), 342–362 (DVQFELLLAVALVVMVIYVFL), 373–393 (VAVPLSLIGTFAAMYFLGFSI), 396–416 (LTLMALTIATGFVVDDAIVVI), 440–460 (IGFTIISLTFSLVAVLIPLLF), 472–492 (FAVTLAVAILISAVVSLTLTP), 537–557 (WLTLGVAFSTLLLTVLLYLLI), 863–883 (LGGTLWLILAAVVAMYIVLGV), 888–908 (FIHPVTILSTLPTAGVGALLA), 911–931 (MAGSELDVIAIIGIILLIGIV), 968–988 (ILMTTLAALLGALPLMLSTGV), and 1002–1022 (GGLVMSQILTLFTTPVIYLLF).

This sequence belongs to the resistance-nodulation-cell division (RND) (TC 2.A.6) family. MdtB subfamily. Part of a tripartite efflux system composed of MdtA, MdtB and MdtC. MdtB forms a heteromultimer with MdtC.

It localises to the cell inner membrane. This is Multidrug resistance protein MdtB from Serratia proteamaculans (strain 568).